A 992-amino-acid chain; its full sequence is UvrABC system protein A (992 aa).

Positions 1 to 11 (MPKNSSTTVSS) are enriched in polar residues. Residues 1-30 (MPKNSSTTVSSAVEAHAGGLASGPGGARSG) form a disordered region. Residue 62–69 (GLSGSGKS) coordinates ATP. The C4-type; atypical zinc finger occupies 302–330 (CPNGHEQTVDEIEPRSFSFNNPFGACPEC). ABC transporter domains follow at residues 360–639 (WSLG…TRSV) and 659–988 (PEKG…RFLA). 692 to 699 (GVSGSGKS) contributes to the ATP binding site. The segment at 791–817 (CEACAGDGTLKIEMNFLPDVYVPCEVC) adopts a C4-type zinc-finger fold.

It belongs to the ABC transporter superfamily. UvrA family. As to quaternary structure, forms a heterotetramer with UvrB during the search for lesions.

It localises to the cytoplasm. In terms of biological role, the UvrABC repair system catalyzes the recognition and processing of DNA lesions. UvrA is an ATPase and a DNA-binding protein. A damage recognition complex composed of 2 UvrA and 2 UvrB subunits scans DNA for abnormalities. When the presence of a lesion has been verified by UvrB, the UvrA molecules dissociate. This chain is UvrABC system protein A, found in Micrococcus luteus (Micrococcus lysodeikticus).